The following is a 401-amino-acid chain: Inactive leucine-rich repeat receptor-like protein kinase CORYNE (401 aa).

The first 33 residues, 1–33 (MKQRRRRNGCSSSNTISLLLLFFLVFFSRTSTS), serve as a signal peptide directing secretion. Over 34-62 (TSCRRRTVKHLSTTSTSSTPLESRITSKV) the chain is Extracellular. Residues 63–83 (IVISIVSGILTGLVSALVLAF) traverse the membrane as a helical segment. The Cytoplasmic segment spans residues 84 to 401 (LVRSIVKFMK…VHMLTQLHSF (318 aa)). Residues 118-401 (SNGIQLLGSD…VHMLTQLHSF (284 aa)) form the Protein kinase domain. ATP is bound by residues 124–132 (LGSDLNGKY) and Lys-146.

The protein belongs to the protein kinase superfamily. Ser/Thr protein kinase family. As to quaternary structure, self-interacts. Parts of a tetrameric complex made of two CLV2/CRN heterodimers that can interact with CLV3 and CLE peptides. CLV2/CRN heterodimer interacts with CLV1 homodimers. Interacts with CLV1 and CLV2. CLV2/CRN heterodimer can interact with BAM3. As to expression, present in roots, stems, leaves, inflorescence, flowers and siliques. Mostly expressed in shoot tips and, to a lesser extent, in young organs and roots. Also expressed in the inner tissues of the proximal root meristem. Expressed in the vascular cylinder of root tips, mostly in phloem poles.

The protein localises to the cell membrane. It is found in the endoplasmic reticulum membrane. Involved in the perception of CLV3 and CLV3-like (CLE) peptides, that act as extracellular signals regulating meristem maintenance. Modulates root, shoot and flower apical meristem maintenance and floral organ development regulation, probably via CLAVATA (CLV)-like pathways involving at least CLV3 and CLE19. In complex with CLV2, perceives secreted CLV3-like effector proteins from plant-parasitic cyst nematodes as ligand mimics of the plant CLE signaling pathway. This recognition is required for proper feeding structure (syncytium) development and ultimately successful nematode infection. CLE14 perception by CLV2/CRN complex triggers root meristem differentiation. Required for the sensing of the root CLE peptides (e.g. CLE8, CLE9/CLE10, CLE11, CLE13, CLE14, CLE16, CLE17, CLE18, CLE20, CLE21, CLE25, CLE26, CLE40, CLE41/CLE44 and CLE45), which also involves CLV2 and leads to root growth regulation, mostly in the phloem and protophloem. Promotes the accumulation of BAM3, especially at later stages of protophloem development. This Arabidopsis thaliana (Mouse-ear cress) protein is Inactive leucine-rich repeat receptor-like protein kinase CORYNE.